A 559-amino-acid chain; its full sequence is Potassium-transporting ATPase potassium-binding subunit (559 aa).

13 helical membrane-spanning segments follow: residues 5–25, 27–47, 63–83, 132–152, 170–190, 253–273, 283–303, 327–347, 356–376, 379–399, 416–436, 484–504, and 524–544; these read GFLL…PLGS, LARL…RILW, LLAL…LLFW, GLTV…FALI, LVRI…LFFI, LAQM…FGEA, LLWA…WAEV, FGVL…CGAV, ALGG…FGGV, GLYG…LMIG, MTAL…ALAM, LLAF…MAIA, and GALF…LTFI.

The protein belongs to the KdpA family. As to quaternary structure, the system is composed of three essential subunits: KdpA, KdpB and KdpC.

It is found in the cell inner membrane. Part of the high-affinity ATP-driven potassium transport (or Kdp) system, which catalyzes the hydrolysis of ATP coupled with the electrogenic transport of potassium into the cytoplasm. This subunit binds the periplasmic potassium ions and delivers the ions to the membrane domain of KdpB through an intramembrane tunnel. The polypeptide is Potassium-transporting ATPase potassium-binding subunit (Salmonella typhi).